The following is a 255-amino-acid chain: Proteasome subunit alpha type-3 (255 aa).

Position 2 is an N-acetylserine (S2). 3 positions are modified to N6-acetyllysine: K57, K206, and K230. Residues S243 and S250 each carry the phosphoserine modification.

This sequence belongs to the peptidase T1A family. The 26S proteasome consists of a 20S proteasome core and two 19S regulatory subunits. The 20S proteasome core is a barrel-shaped complex made of 28 subunits that are arranged in four stacked rings. The two outer rings are each formed by seven alpha subunits, and the two inner rings are formed by seven beta subunits. The proteolytic activity is exerted by three beta-subunits PSMB5, PSMB6 and PSMB7. Interacts with AURKB. Interacts with CDKN1A. Interacts with MDM2 and RB1. Interacts with the C-terminus of TBXA2R isoform 2. Interacts with DNAJB2.

The protein localises to the cytoplasm. Its subcellular location is the nucleus. Component of the 20S core proteasome complex involved in the proteolytic degradation of most intracellular proteins. This complex plays numerous essential roles within the cell by associating with different regulatory particles. Associated with two 19S regulatory particles, forms the 26S proteasome and thus participates in the ATP-dependent degradation of ubiquitinated proteins. The 26S proteasome plays a key role in the maintenance of protein homeostasis by removing misfolded or damaged proteins that could impair cellular functions, and by removing proteins whose functions are no longer required. Associated with the PA200 or PA28, the 20S proteasome mediates ubiquitin-independent protein degradation. This type of proteolysis is required in several pathways including spermatogenesis (20S-PA200 complex) or generation of a subset of MHC class I-presented antigenic peptides (20S-PA28 complex). Binds to the C-terminus of CDKN1A and thereby mediates its degradation. Negatively regulates the membrane trafficking of the cell-surface thromboxane A2 receptor (TBXA2R) isoform 2. The polypeptide is Proteasome subunit alpha type-3 (PSMA3) (Bos taurus (Bovine)).